The following is a 289-amino-acid chain: Phosphatidylglycerol--prolipoprotein diacylglyceryl transferase (289 aa).

Transmembrane regions (helical) follow at residues 23 to 43 (ALHW…WLAV), 61 to 81 (LLYM…VLFY), 99 to 119 (GGMS…WFAH), 125 to 145 (FFQV…AGRL), 199 to 219 (SQLY…NLFI), 226 to 246 (GSVS…TEFF), and 259 to 279 (LFSM…LMMV). Position 144 (arginine 144) interacts with a 1,2-diacyl-sn-glycero-3-phospho-(1'-sn-glycerol).

Belongs to the Lgt family.

It localises to the cell inner membrane. The catalysed reaction is L-cysteinyl-[prolipoprotein] + a 1,2-diacyl-sn-glycero-3-phospho-(1'-sn-glycerol) = an S-1,2-diacyl-sn-glyceryl-L-cysteinyl-[prolipoprotein] + sn-glycerol 1-phosphate + H(+). It functions in the pathway protein modification; lipoprotein biosynthesis (diacylglyceryl transfer). Its function is as follows. Catalyzes the transfer of the diacylglyceryl group from phosphatidylglycerol to the sulfhydryl group of the N-terminal cysteine of a prolipoprotein, the first step in the formation of mature lipoproteins. The chain is Phosphatidylglycerol--prolipoprotein diacylglyceryl transferase from Pectobacterium carotovorum subsp. carotovorum (strain PC1).